The following is a 218-amino-acid chain: Probable chemoreceptor glutamine deamidase CheD (218 aa).

Belongs to the CheD family.

It carries out the reaction L-glutaminyl-[protein] + H2O = L-glutamyl-[protein] + NH4(+). Its function is as follows. Probably deamidates glutamine residues to glutamate on methyl-accepting chemotaxis receptors (MCPs), playing an important role in chemotaxis. The protein is Probable chemoreceptor glutamine deamidase CheD of Saccharophagus degradans (strain 2-40 / ATCC 43961 / DSM 17024).